Here is a 102-residue protein sequence, read N- to C-terminus: Integration host factor subunit beta (102 aa).

Belongs to the bacterial histone-like protein family. Heterodimer of an alpha and a beta chain.

This protein is one of the two subunits of integration host factor, a specific DNA-binding protein that functions in genetic recombination as well as in transcriptional and translational control. This Rhizobium radiobacter (Agrobacterium tumefaciens) protein is Integration host factor subunit beta (ihfB).